A 752-amino-acid chain; its full sequence is Protein ORF24 (752 aa).

It belongs to the herpesviridae UL87 family. In terms of assembly, interacts with ORF34.

Its function is as follows. Plays a role in the expression of late viral mRNAs together with ORF34. The protein is Protein ORF24 (ORF24) of Homo sapiens (Human).